A 1302-amino-acid polypeptide reads, in one-letter code: Multidrug resistance protein homolog 65 (1302 aa).

The tract at residues 1-23 is disordered; the sequence is MERDEVSTSSSEGKSQEEAPMAE. Topologically, residues 1–48 are cytoplasmic; the sequence is MERDEVSTSSSEGKSQEEAPMAEGLEPTEPIAFLKLFRFSTYGEIGWL. An ABC transmembrane type-1 1 domain is found at 48–369; sequence LFFGFIMCCI…TAPFLESFAT (322 aa). The chain crosses the membrane as a helical span at residues 49–69; the sequence is FFGFIMCCIKALTLPAVVIIY. The Extracellular segment spans residues 70 to 118; that stretch reads SEFTSMLVDRAMQFGTSSNVHALPLFGGGKTLTNASREENNEALYDDSI. N-linked (GlcNAc...) asparagine glycosylation occurs at Asn-103. Residues 119-147 traverse the membrane as a helical segment; sequence SYGILLTIASVVMFISGIFSVDVFNMVAL. At 148–194 the chain is on the cytoplasmic side; it reads RQVTRMRIKLFSSVIRQDIGWHDLASKQNFTQSMVDDVEKIRDGISE. A helical transmembrane segment spans residues 195-215; sequence KVGHFVYLVVGFIITVAISFS. Over 216–223 the chain is Extracellular; that stretch reads YGWKLTLA. A helical transmembrane segment spans residues 224-242; the sequence is VSSYIPLVILLNYYVAKFQ. Over 243–302 the chain is Cytoplasmic; it reads GKLTAREQESYAGAGNLAEEILSSIRTVVSFGGEKSEVQRYENFLVPARKASQWKGAFSG. The chain crosses the membrane as a helical span at residues 303-323; sequence LSDAVLKSMLYLSCAGAFWYG. Residues 324 to 341 are Extracellular-facing; it reads VNLIIDDRNVENKEYTPA. Residues 342–362 traverse the membrane as a helical segment; it reads ILMIAFFGIIVGADNIARTAP. Over 363-731 the chain is Cytoplasmic; that stretch reads FLESFATARG…LQLAKQEWCY (369 aa). The ABC transporter 1 domain maps to 405–641; sequence VEFQDVFFRY…EGAYYNMVRA (237 aa). Residue 440-447 participates in ATP binding; sequence GSSGCGKS. A helical membrane pass occupies residues 732-753; that stretch reads LILGTISAVAVGFLYPAFAVIF. Positions 732-1020 constitute an ABC transmembrane type-1 2 domain; it reads LILGTISAVA…SLAFTPAFSA (289 aa). Residues 754–776 lie on the Extracellular side of the membrane; that stretch reads GEFYAALAEKDPEDALRRTAVLS. Residues 777-798 form a helical membrane-spanning segment; that stretch reads WACLGLAFLTGLVCFLQTYLFN. Topologically, residues 799–852 are cytoplasmic; that stretch reads YAGIWLTTRMRAMTFNAMVNQEVGWFDDENNSVGALSARLSGEAVDIQGAIGYP. Residues 853–873 form a helical membrane-spanning segment; that stretch reads LSGMIQALSNFISSVSVAMYY. Residue Asn-874 is a topological domain, extracellular. The chain crosses the membrane as a helical span at residues 875 to 894; that stretch reads WKLALLCLANCPIIVGSVIL. The Cytoplasmic segment spans residues 895–956; that stretch reads EAKMMSNAVV…VEVLIRQKLR (62 aa). The helical transmembrane segment at 957 to 977 threads the bilayer; it reads WRGVLNSTMQASAFFAYAVAL. Topologically, residues 978–993 are extracellular; it reads CYGGVLVSEGQLPFQD. Residues 994–1014 traverse the membrane as a helical segment; that stretch reads IIKVSETLLYGSMMLAQSLAF. Over 1015–1302 the chain is Cytoplasmic; sequence TPAFSAALIA…AKLHKTQKDH (288 aa). The ABC transporter 2 domain occupies 1059–1298; the sequence is VRYRGIQFRY…GGIYAKLHKT (240 aa). An ATP-binding site is contributed by 1094–1101; it reads GHSGCGKS.

It belongs to the ABC transporter superfamily. ABCB family. Multidrug resistance exporter (TC 3.A.1.201) subfamily.

It is found in the membrane. It catalyses the reaction ATP + H2O + xenobioticSide 1 = ADP + phosphate + xenobioticSide 2.. The polypeptide is Multidrug resistance protein homolog 65 (Mdr65) (Drosophila melanogaster (Fruit fly)).